Consider the following 338-residue polypeptide: Lipoyl synthase (338 aa).

Residues 1 to 24 (MTTVQEAVPNLIPTQDATPRPAPK) are disordered. 7 residues coordinate [4Fe-4S] cluster: C84, C89, C95, C110, C114, C117, and S324. Residues 96 to 313 (FSGGTATFMI…AEEGYKMGFK (218 aa)) enclose the Radical SAM core domain.

The protein belongs to the radical SAM superfamily. Lipoyl synthase family. Requires [4Fe-4S] cluster as cofactor.

It is found in the cytoplasm. It carries out the reaction [[Fe-S] cluster scaffold protein carrying a second [4Fe-4S](2+) cluster] + N(6)-octanoyl-L-lysyl-[protein] + 2 oxidized [2Fe-2S]-[ferredoxin] + 2 S-adenosyl-L-methionine + 4 H(+) = [[Fe-S] cluster scaffold protein] + N(6)-[(R)-dihydrolipoyl]-L-lysyl-[protein] + 4 Fe(3+) + 2 hydrogen sulfide + 2 5'-deoxyadenosine + 2 L-methionine + 2 reduced [2Fe-2S]-[ferredoxin]. It participates in protein modification; protein lipoylation via endogenous pathway; protein N(6)-(lipoyl)lysine from octanoyl-[acyl-carrier-protein]: step 2/2. Functionally, catalyzes the radical-mediated insertion of two sulfur atoms into the C-6 and C-8 positions of the octanoyl moiety bound to the lipoyl domains of lipoate-dependent enzymes, thereby converting the octanoylated domains into lipoylated derivatives. In Pseudomonas putida (strain ATCC 700007 / DSM 6899 / JCM 31910 / BCRC 17059 / LMG 24140 / F1), this protein is Lipoyl synthase.